The following is a 92-amino-acid chain: Small ribosomal subunit protein uS19c (92 aa).

The protein belongs to the universal ribosomal protein uS19 family.

It localises to the plastid. It is found in the chloroplast. Its function is as follows. Protein S19 forms a complex with S13 that binds strongly to the 16S ribosomal RNA. The chain is Small ribosomal subunit protein uS19c from Cicer arietinum (Chickpea).